The sequence spans 495 residues: UDP-N-acetylmuramate--L-alanine ligase (495 aa).

Residue 153 to 159 participates in ATP binding; that stretch reads GTHGKTT.

This sequence belongs to the MurCDEF family.

Its subcellular location is the cytoplasm. The catalysed reaction is UDP-N-acetyl-alpha-D-muramate + L-alanine + ATP = UDP-N-acetyl-alpha-D-muramoyl-L-alanine + ADP + phosphate + H(+). It participates in cell wall biogenesis; peptidoglycan biosynthesis. In terms of biological role, cell wall formation. The polypeptide is UDP-N-acetylmuramate--L-alanine ligase (Gloeothece citriformis (strain PCC 7424) (Cyanothece sp. (strain PCC 7424))).